A 127-amino-acid polypeptide reads, in one-letter code: Odontogenesis-associated phosphoprotein (127 aa).

The N-terminal stretch at 1-23 (MAPGFHFSWLLVSWLVVTTVKGQ) is a signal peptide.

Expressed in enamel organs and not expressed in the heart, kidney, or spleen.

The protein localises to the secreted. Its function is as follows. May promote nucleation of hydroxyapatite. This is Odontogenesis-associated phosphoprotein from Rattus norvegicus (Rat).